The following is a 167-amino-acid chain: Transcription factor 24 (167 aa).

Over residues 1–23 the composition is skewed to low complexity; sequence MDRGRPAGSPLSASAEPAPLAAA. A disordered region spans residues 1 to 60; it reads MDRGRPAGSPLSASAEPAPLAAAIRDSRPGRTGPGPAGPGGGSRSGSGRPAAANAARERS. The segment covering 32 to 45 has biased composition (gly residues); the sequence is TGPGPAGPGGGSRS. A compositionally biased stretch (low complexity) spans 46–55; that stretch reads GSGRPAAANA. A bHLH domain is found at 49 to 101; that stretch reads RPAAANAARERSRVQTLRHAFLELQRTLPSVPPDTKLSKLDVLLLATTYIAHL.

Efficient DNA binding requires dimerization with another bHLH protein.

It localises to the nucleus. Functionally, putative transcription factor. This Homo sapiens (Human) protein is Transcription factor 24 (TCF24).